Here is a 319-residue protein sequence, read N- to C-terminus: Malate dehydrogenase (319 aa).

NAD(+)-binding positions include 10–15 (GAGQIG) and Asp34. Positions 85 and 91 each coordinate substrate. Residues Asn98 and 121–123 (ITN) each bind NAD(+). Residues Asn123 and Arg154 each coordinate substrate. The active-site Proton acceptor is His178.

The protein belongs to the LDH/MDH superfamily. MDH type 3 family.

The enzyme catalyses (S)-malate + NAD(+) = oxaloacetate + NADH + H(+). Its function is as follows. Catalyzes the reversible oxidation of malate to oxaloacetate. The polypeptide is Malate dehydrogenase (Rhodospirillum centenum (strain ATCC 51521 / SW)).